The primary structure comprises 328 residues: tRNA uridine(34) hydroxylase (328 aa).

In terms of domain architecture, Rhodanese spans 130–224 (LDEDTIVLDT…YGKDPEVQGE (95 aa)). The Cysteine persulfide intermediate role is filled by C184.

This sequence belongs to the TrhO family.

The enzyme catalyses uridine(34) in tRNA + AH2 + O2 = 5-hydroxyuridine(34) in tRNA + A + H2O. Its function is as follows. Catalyzes oxygen-dependent 5-hydroxyuridine (ho5U) modification at position 34 in tRNAs. The protein is tRNA uridine(34) hydroxylase of Streptococcus uberis (strain ATCC BAA-854 / 0140J).